The sequence spans 279 residues: Large ribosomal subunit protein uL2 (279 aa).

The interval 223-279 (VAMNPIDHPHGGGEGRTSGGRHPVTPWGKGTKGTRTRSNKSTDKYILRSRHAKKKGR) is disordered. Residues 269 to 279 (LRSRHAKKKGR) show a composition bias toward basic residues.

Belongs to the universal ribosomal protein uL2 family. Part of the 50S ribosomal subunit. Forms a bridge to the 30S subunit in the 70S ribosome.

In terms of biological role, one of the primary rRNA binding proteins. Required for association of the 30S and 50S subunits to form the 70S ribosome, for tRNA binding and peptide bond formation. It has been suggested to have peptidyltransferase activity; this is somewhat controversial. Makes several contacts with the 16S rRNA in the 70S ribosome. The protein is Large ribosomal subunit protein uL2 of Paracoccus denitrificans (strain Pd 1222).